The sequence spans 396 residues: 1-deoxy-D-xylulose 5-phosphate reductoisomerase (396 aa).

Residues Thr10, Gly11, Ser12, Ile13, and Asn123 each contribute to the NADPH site. Lys124 serves as a coordination point for 1-deoxy-D-xylulose 5-phosphate. Residue Glu125 coordinates NADPH. Asp149 serves as a coordination point for Mn(2+). 4 residues coordinate 1-deoxy-D-xylulose 5-phosphate: Ser150, Glu151, Ser185, and His208. Glu151 lines the Mn(2+) pocket. Gly214 provides a ligand contact to NADPH. Residues Ser221, Asn226, Lys227, and Glu230 each contribute to the 1-deoxy-D-xylulose 5-phosphate site. Glu230 is a Mn(2+) binding site.

It belongs to the DXR family. It depends on Mg(2+) as a cofactor. The cofactor is Mn(2+).

The catalysed reaction is 2-C-methyl-D-erythritol 4-phosphate + NADP(+) = 1-deoxy-D-xylulose 5-phosphate + NADPH + H(+). Its pathway is isoprenoid biosynthesis; isopentenyl diphosphate biosynthesis via DXP pathway; isopentenyl diphosphate from 1-deoxy-D-xylulose 5-phosphate: step 1/6. Its function is as follows. Catalyzes the NADPH-dependent rearrangement and reduction of 1-deoxy-D-xylulose-5-phosphate (DXP) to 2-C-methyl-D-erythritol 4-phosphate (MEP). The polypeptide is 1-deoxy-D-xylulose 5-phosphate reductoisomerase (Shewanella frigidimarina (strain NCIMB 400)).